We begin with the raw amino-acid sequence, 278 residues long: E3 ubiquitin-protein ligase MARCHF5 (278 aa).

Residues 6–75 (LQQMLDRSCW…PQCNAEYLIV (70 aa)) form an RING-CH-type zinc finger. Residues Cys14, Cys17, Cys33, Cys35, His43, Cys46, Cys65, and Cys68 each coordinate Zn(2+). The next 4 helical transmembrane spans lie at 99–119 (FAAA…YGAV), 139–159 (PLFL…GKMI), 209–229 (ILCG…LMFS), and 238–258 (TILG…YFKQ).

As to quaternary structure, monomer and homodimer. Interacts with MFN1, MFN2, DNM1L and FIS1. Post-translationally, autoubiquitinated leading to degradation (short half-life).

Its subcellular location is the mitochondrion outer membrane. It carries out the reaction S-ubiquitinyl-[E2 ubiquitin-conjugating enzyme]-L-cysteine + [acceptor protein]-L-lysine = [E2 ubiquitin-conjugating enzyme]-L-cysteine + N(6)-ubiquitinyl-[acceptor protein]-L-lysine.. It participates in protein modification; protein ubiquitination. Functionally, mitochondrial E3 ubiquitin-protein ligase that plays a crucial role in the control of mitochondrial morphology by acting as a positive regulator of mitochondrial fission and as an important regulator of immune response. Plays a crucial role in maintaining mitochondrial homeostasis by regulating the dynamics of mitochondria through the ubiquitination of key proteins involved in fission and fusion such as FIS1, DNM1L and MFN1. Acts as a critical determinant of mitotic apoptosis through both MCL1-dependent and -independent pathways. Turns off persistent immune signaling by degrading oligomeric complexes of retinoic acid-inducible gene I/DDX58 and mitochondrial antiviral-signaling protein/MAVS formed upon RNA virus infection. Promotes STING-mediated type-I interferon production via 'Lys-63'-linked ubiquitination of STING1 thereby preserving its activity and preventing the formation of inactive STING1 polymers. Plays also an essential role in the formation of PEX3-containing vesicles in the de novo biogenesis of peroxisomes from mitochondria. Acts as a regulator of NLRP3 inflammasome activation on the mitochondria by mediating the 'Lys-27'-linked polyubiquitination of NLRP3, positively regulating the NLRP3-NEK7 complex formation and NLRP3 oligomerization. The protein is E3 ubiquitin-protein ligase MARCHF5 (MARCHF5) of Bos taurus (Bovine).